A 38-amino-acid chain; its full sequence is Photosystem II reaction center protein L (38 aa).

The helical transmembrane segment at 17-37 threads the bilayer; sequence SLYWGLLLIFVLAVLFSNYFF.

This sequence belongs to the PsbL family. In terms of assembly, PSII is composed of 1 copy each of membrane proteins PsbA, PsbB, PsbC, PsbD, PsbE, PsbF, PsbH, PsbI, PsbJ, PsbK, PsbL, PsbM, PsbT, PsbX, PsbY, PsbZ, Psb30/Ycf12, at least 3 peripheral proteins of the oxygen-evolving complex and a large number of cofactors. It forms dimeric complexes.

Its subcellular location is the plastid. The protein localises to the chloroplast thylakoid membrane. One of the components of the core complex of photosystem II (PSII). PSII is a light-driven water:plastoquinone oxidoreductase that uses light energy to abstract electrons from H(2)O, generating O(2) and a proton gradient subsequently used for ATP formation. It consists of a core antenna complex that captures photons, and an electron transfer chain that converts photonic excitation into a charge separation. This subunit is found at the monomer-monomer interface and is required for correct PSII assembly and/or dimerization. This chain is Photosystem II reaction center protein L, found in Antirrhinum majus (Garden snapdragon).